The primary structure comprises 249 residues: Segregation and condensation protein A (249 aa).

The protein belongs to the ScpA family. Component of a cohesin-like complex composed of ScpA, ScpB and the Smc homodimer, in which ScpA and ScpB bind to the head domain of Smc. The presence of the three proteins is required for the association of the complex with DNA.

The protein localises to the cytoplasm. Functionally, participates in chromosomal partition during cell division. May act via the formation of a condensin-like complex containing Smc and ScpB that pull DNA away from mid-cell into both cell halves. The sequence is that of Segregation and condensation protein A from Mycoplasmopsis pulmonis (strain UAB CTIP) (Mycoplasma pulmonis).